The sequence spans 143 residues: Large ribosomal subunit protein uL16c (143 aa).

This sequence belongs to the universal ribosomal protein uL16 family. In terms of assembly, part of the 50S ribosomal subunit.

The protein resides in the plastid. It localises to the chloroplast. The polypeptide is Large ribosomal subunit protein uL16c (Spirogyra maxima (Green alga)).